The primary structure comprises 352 residues: Holliday junction branch migration complex subunit RuvB (352 aa).

Residues 13-201 form a large ATPase domain (RuvB-L) region; the sequence is FSLRKKELRL…FGISQKIEFY (189 aa). ATP contacts are provided by residues Arg41, Gly82, Lys85, Thr86, Thr87, 148 to 150, Arg191, Tyr201, and Arg238; that span reads EDF. Thr86 is a binding site for Mg(2+). Positions 202-273 are small ATPAse domain (RuvB-S); that stretch reads TYDELKQIIV…LIKKALNSYQ (72 aa). Positions 276–352 are head domain (RuvB-H); sequence EKGLDSLDRN…KYIDSKNENF (77 aa). Positions 330 and 335 each coordinate DNA.

Belongs to the RuvB family. In terms of assembly, homohexamer. Forms an RuvA(8)-RuvB(12)-Holliday junction (HJ) complex. HJ DNA is sandwiched between 2 RuvA tetramers; dsDNA enters through RuvA and exits via RuvB. An RuvB hexamer assembles on each DNA strand where it exits the tetramer. Each RuvB hexamer is contacted by two RuvA subunits (via domain III) on 2 adjacent RuvB subunits; this complex drives branch migration. In the full resolvosome a probable DNA-RuvA(4)-RuvB(12)-RuvC(2) complex forms which resolves the HJ.

Its subcellular location is the cytoplasm. The catalysed reaction is ATP + H2O = ADP + phosphate + H(+). Functionally, the RuvA-RuvB-RuvC complex processes Holliday junction (HJ) DNA during genetic recombination and DNA repair, while the RuvA-RuvB complex plays an important role in the rescue of blocked DNA replication forks via replication fork reversal (RFR). RuvA specifically binds to HJ cruciform DNA, conferring on it an open structure. The RuvB hexamer acts as an ATP-dependent pump, pulling dsDNA into and through the RuvAB complex. RuvB forms 2 homohexamers on either side of HJ DNA bound by 1 or 2 RuvA tetramers; 4 subunits per hexamer contact DNA at a time. Coordinated motions by a converter formed by DNA-disengaged RuvB subunits stimulates ATP hydrolysis and nucleotide exchange. Immobilization of the converter enables RuvB to convert the ATP-contained energy into a lever motion, pulling 2 nucleotides of DNA out of the RuvA tetramer per ATP hydrolyzed, thus driving DNA branch migration. The RuvB motors rotate together with the DNA substrate, which together with the progressing nucleotide cycle form the mechanistic basis for DNA recombination by continuous HJ branch migration. Branch migration allows RuvC to scan DNA until it finds its consensus sequence, where it cleaves and resolves cruciform DNA. The sequence is that of Holliday junction branch migration complex subunit RuvB from Prochlorococcus marinus (strain MIT 9215).